We begin with the raw amino-acid sequence, 92 residues long: Large ribosomal subunit protein eL31 (92 aa).

The protein belongs to the eukaryotic ribosomal protein eL31 family.

The polypeptide is Large ribosomal subunit protein eL31 (Desulfurococcus amylolyticus (strain DSM 18924 / JCM 16383 / VKM B-2413 / 1221n) (Desulfurococcus kamchatkensis)).